Consider the following 364-residue polypeptide: MSGNTFGKLFAVTNFGESHGPAIGCVIDGCPPGMTLSVTDIQPDLDRRRPGTSKFVTQRNEPDAVEILSGVYEGKTTGTPICLLIKNTDQRSKDYGNIVQTFRPGHADYTYYQKYGIRDPRGGGRSSARLTAPMVAAGAVAKKWLFEHYGTVFRGCMTQIGELPITFESWDFVPDNPFFAPIADVSALASYMEVLRKAGDSCGARIRVSASNVPVGLGEPLFDKLDADIAYAMMGINAVKGVEIGAGFASVAQHGSSHGDSLSPKGFKSNNAGGVLGGISSGQDLELSIAIKPTSSILTPRESIDMAGQSTEVITKGRHDPCVGIRATPIAEAMLALVVMDHALRQRAQCGDVTVNLKPIKASI.

An NADP(+)-binding site is contributed by arginine 48. FMN-binding positions include 125 to 127 (RSS), 237 to 238 (NA), glycine 277, 292 to 296 (KPTSS), and arginine 318.

The protein belongs to the chorismate synthase family. Homotetramer. Requires FMNH2 as cofactor.

The catalysed reaction is 5-O-(1-carboxyvinyl)-3-phosphoshikimate = chorismate + phosphate. It functions in the pathway metabolic intermediate biosynthesis; chorismate biosynthesis; chorismate from D-erythrose 4-phosphate and phosphoenolpyruvate: step 7/7. In terms of biological role, catalyzes the anti-1,4-elimination of the C-3 phosphate and the C-6 proR hydrogen from 5-enolpyruvylshikimate-3-phosphate (EPSP) to yield chorismate, which is the branch point compound that serves as the starting substrate for the three terminal pathways of aromatic amino acid biosynthesis. This reaction introduces a second double bond into the aromatic ring system. This is Chorismate synthase from Albidiferax ferrireducens (strain ATCC BAA-621 / DSM 15236 / T118) (Rhodoferax ferrireducens).